Consider the following 132-residue polypeptide: Small ribosomal subunit protein uS8 (132 aa).

It belongs to the universal ribosomal protein uS8 family. Part of the 30S ribosomal subunit. Contacts proteins S5 and S12.

In terms of biological role, one of the primary rRNA binding proteins, it binds directly to 16S rRNA central domain where it helps coordinate assembly of the platform of the 30S subunit. This is Small ribosomal subunit protein uS8 from Leuconostoc mesenteroides subsp. mesenteroides (strain ATCC 8293 / DSM 20343 / BCRC 11652 / CCM 1803 / JCM 6124 / NCDO 523 / NBRC 100496 / NCIMB 8023 / NCTC 12954 / NRRL B-1118 / 37Y).